Here is a 116-residue protein sequence, read N- to C-terminus: Large ribosomal subunit protein bL17 (116 aa).

This sequence belongs to the bacterial ribosomal protein bL17 family. As to quaternary structure, part of the 50S ribosomal subunit. Contacts protein L32.

This chain is Large ribosomal subunit protein bL17, found in Rippkaea orientalis (strain PCC 8801 / RF-1) (Cyanothece sp. (strain PCC 8801)).